The primary structure comprises 84 residues: Chymotrypsin inhibitor Ani s 6 (84 aa).

The signal sequence occupies residues 1-22; sequence MFQSTFFLVLMVCVATARFANK. Intrachain disulfides connect C25-C58, C34-C54, C38-C50, C42-C79, and C60-C73. Residues 25–79 form the TIL domain; the sequence is CPPNEEYNECGNPCQEKCDNGEPVICTYQCEHRCFCKQGYVRLTEDGECVPEEFC.

It belongs to the serine protease inhibitor-like (TIL domain-containing) family.

The protein localises to the secreted. Inhibits alpha-chymotrypsin, but not trypsin. The chain is Chymotrypsin inhibitor Ani s 6 from Anisakis simplex (Herring worm).